A 235-amino-acid polypeptide reads, in one-letter code: Small ribosomal subunit protein eS4 (235 aa).

The S4 RNA-binding domain occupies 38-99 (VTLLTIIRDY…GESYRVVYNN (62 aa)).

This sequence belongs to the eukaryotic ribosomal protein eS4 family.

The chain is Small ribosomal subunit protein eS4 (rps4e) from Thermoplasma volcanium (strain ATCC 51530 / DSM 4299 / JCM 9571 / NBRC 15438 / GSS1).